A 406-amino-acid chain; its full sequence is MTKKLFYYQASNPLNQKQKGSIIADTKQQAHFQLISRGLTHIKLQQNWQFGAKPKNSEISELLNQLATLLQSAIPLKNSLQILQQNCTQIVLNEWLERLLQSIESGLAFSQAIEQQGKYLTQQEIQLIQVGEMTGKLAVVCKKIATHRSQSLALQRKLQKIMLYPSMVLGISLLLTLALLLFIVPQFAEMYSGNNAELPTITAILLSISNFLKQNIGILLFFVLSFFLFYYFYLKRQTWFYQKKNQLISITPIFGTIQKLSRLVNFSQSLQIMLQAGVPLNQALDSFLPRTQTWQTKKTLVNDIVLDKEVRSILQWVSQGYAFSNSVSSDLFPMEAQQMLQIGEQSGKLALMLEHIAENYQEKLNHQIDLLSQMLEPLMMVIIGSLIGIIMMGMYLPIFNMGSVIQ.

3 helical membrane passes run 167–187 (MVLGISLLLTLALLLFIVPQF), 214–234 (QNIGILLFFVLSFFLFYYFYL), and 379–399 (MMVIIGSLIGIIMMGMYLPIF).

It belongs to the GSP F family.

It localises to the cell inner membrane. The polypeptide is Protein transport protein HofC homolog (hofC) (Haemophilus influenzae (strain ATCC 51907 / DSM 11121 / KW20 / Rd)).